The chain runs to 180 residues: Translation initiation factor IF-3 (180 aa).

It belongs to the IF-3 family. As to quaternary structure, monomer.

It localises to the cytoplasm. IF-3 binds to the 30S ribosomal subunit and shifts the equilibrium between 70S ribosomes and their 50S and 30S subunits in favor of the free subunits, thus enhancing the availability of 30S subunits on which protein synthesis initiation begins. This Shewanella baltica (strain OS223) protein is Translation initiation factor IF-3.